A 62-amino-acid polypeptide reads, in one-letter code: Beta-defensin 33 (62 aa).

The N-terminal stretch at 1-20 (MRLLFLLFILLVCLAQTTSG) is a signal peptide. Disulfide bonds link cysteine 30/cysteine 59, cysteine 37/cysteine 52, and cysteine 45/cysteine 60.

Belongs to the beta-defensin family.

Its subcellular location is the secreted. Its function is as follows. Has antibacterial activity. This Mus musculus (Mouse) protein is Beta-defensin 33 (Defb33).